The primary structure comprises 129 residues: Small ribosomal subunit protein uS9 (129 aa).

Belongs to the universal ribosomal protein uS9 family.

This Helicobacter pylori (strain Shi470) protein is Small ribosomal subunit protein uS9.